The chain runs to 282 residues: DegV domain-containing protein SpyM3_0586 (282 aa).

The DegV domain maps to 3–280; it reads LAVITDSTAT…EGAIAFGVTP (278 aa). Positions 61 and 94 each coordinate hexadecanoate.

Its function is as follows. May bind long-chain fatty acids, such as palmitate, and may play a role in lipid transport or fatty acid metabolism. The protein is DegV domain-containing protein SpyM3_0586 of Streptococcus pyogenes serotype M3 (strain ATCC BAA-595 / MGAS315).